The chain runs to 513 residues: GMP synthase [glutamine-hydrolyzing] (513 aa).

In terms of domain architecture, Glutamine amidotransferase type-1 spans 9 to 198; that stretch reads LILVLDFGSQ…VRRVCDCRGQ (190 aa). The active-site Nucleophile is the C86. Residues H172 and E174 contribute to the active site. The GMPS ATP-PPase domain occupies 199-388; sequence WTMENFIEIE…LGIPEHLVWR (190 aa). 226–232 is an ATP binding site; the sequence is SGGVDSS.

As to quaternary structure, homodimer.

The enzyme catalyses XMP + L-glutamine + ATP + H2O = GMP + L-glutamate + AMP + diphosphate + 2 H(+). The protein operates within purine metabolism; GMP biosynthesis; GMP from XMP (L-Gln route): step 1/1. Catalyzes the synthesis of GMP from XMP. The chain is GMP synthase [glutamine-hydrolyzing] from Staphylococcus aureus (strain USA300).